A 276-amino-acid chain; its full sequence is Thymidylate synthase (276 aa).

Arginine 26 is a dUMP binding site. A (6R)-5,10-methylene-5,6,7,8-tetrahydrofolate-binding site is contributed by histidine 56. A dUMP-binding site is contributed by 131–132 (RR). Catalysis depends on cysteine 151, which acts as the Nucleophile. DUMP is bound by residues 178–181 (RSAD), asparagine 189, and 219–221 (HIY). Aspartate 181 is a binding site for (6R)-5,10-methylene-5,6,7,8-tetrahydrofolate. Alanine 275 lines the (6R)-5,10-methylene-5,6,7,8-tetrahydrofolate pocket.

Belongs to the thymidylate synthase family. Bacterial-type ThyA subfamily. Homodimer.

The protein localises to the cytoplasm. It carries out the reaction dUMP + (6R)-5,10-methylene-5,6,7,8-tetrahydrofolate = 7,8-dihydrofolate + dTMP. The protein operates within pyrimidine metabolism; dTTP biosynthesis. Functionally, catalyzes the reductive methylation of 2'-deoxyuridine-5'-monophosphate (dUMP) to 2'-deoxythymidine-5'-monophosphate (dTMP) while utilizing 5,10-methylenetetrahydrofolate (mTHF) as the methyl donor and reductant in the reaction, yielding dihydrofolate (DHF) as a by-product. This enzymatic reaction provides an intracellular de novo source of dTMP, an essential precursor for DNA biosynthesis. The protein is Thymidylate synthase of Polaromonas naphthalenivorans (strain CJ2).